The sequence spans 876 residues: Extended synaptotagmin-2-B (876 aa).

The segment at 1-21 (MASESGAEKGPPTTPAENGQP) is disordered. The Cytoplasmic portion of the chain corresponds to 1 to 35 (MASESGAEKGPPTTPAENGQPGVPIAAAVAADEQG). A helical membrane pass occupies residues 36 to 56 (MISVDIAGLFYQFSKTFILIF). Residues 57–59 (PVY) are Lumenal-facing. The helical transmembrane segment at 60–80 (VLGYFGLSFSWLLIALVLLLW) threads the bilayer. Residues 81 to 876 (WRRNKGNKNS…EDGTRAAASS (796 aa)) are Cytoplasmic-facing. The SMP-LTD domain occupies 123–302 (DIERAEWLNK…LPNRITVPLV (180 aa)). C2 domains lie at 301–421 (LVSD…DEWF) and 446–592 (NLDQ…HLNN). Positions 332, 333, 345, 392, 393, 394, 396, 398, and 399 each coordinate Ca(2+). Residues 614 to 714 (VRSPDEQHTS…KEPTPSIASD (101 aa)) are disordered. Residues 636–656 (PPTPQMPAPSPAVAHKPPPTP) show a composition bias toward pro residues. Residues 686–698 (SSSSLSGSSFTYS) show a composition bias toward low complexity. A C2 3 domain is found at 741–863 (PLGQIQLTIR…DAAKGWTQWF (123 aa)). Residues 788 to 795 (KRRSGRRK) form a required for phosphatidylinositol 4,5-bisphosphate-dependent location at the cell membrane region.

The protein belongs to the extended synaptotagmin family. As to quaternary structure, interacts with fgfr1 that has been activated by fgf1 binding. Interacts (via C2 domains) with the AP-2 complex (via an alpha subunit). Identified in a complex with the AP-2 complex and fgfr1.

The protein localises to the cell membrane. Its subcellular location is the endoplasmic reticulum membrane. Functionally, tethers the endoplasmic reticulum to the cell membrane and promotes the formation of appositions between the endoplasmic reticulum and the cell membrane. Binds glycerophospholipids in a barrel-like domain and may play a role in cellular lipid transport. Plays a role in the rapid internalization of fgfr1 that has been activated by fgf1 binding; this occurs most likely via the AP-2 complex. Required for normal fgf signaling and the activation of downstream signaling cascades via its role in the internalization of activated fgfr1. Required for normal embryonic development via its role in fgf signaling and the downstream regulation of t/xBRA expression. The chain is Extended synaptotagmin-2-B (esyt2-b) from Xenopus laevis (African clawed frog).